The sequence spans 159 residues: Anaerobic nitrite reductase HB2 (159 aa).

One can recognise a Globin domain in the interval 2–152; it reads GFTEKQEGLV…LAEAIKAEMK (151 aa). A Homodimerization motif is present at residues 35–39; it reads EIAPG. Ser-45, Lys-59, His-63, and His-98 together coordinate heme b. The Homodimerization signature appears at 105–117; that stretch reads DPHFEVVKEALLR.

The protein belongs to the plant globin family. In terms of assembly, homodimer. It depends on heme b as a cofactor.

The protein localises to the cytoplasm. It localises to the nucleus. It catalyses the reaction Fe(III)-heme b-[protein] + nitric oxide + H2O = Fe(II)-heme b-[protein] + nitrite + 2 H(+). Phytoglobin that reduces nitrite to nitric oxide (NO) under anoxic conditions (e.g. during flooding or in waterlogged soil). May not function as an oxygen storage or transport protein. Has an unusually high affinity for O(2) through an hexacoordinate heme iron because of a very low dissociation constant. This Gossypium hirsutum (Upland cotton) protein is Anaerobic nitrite reductase HB2.